We begin with the raw amino-acid sequence, 195 residues long: Triosephosphate isomerase, cytosolic (195 aa).

H37 acts as the Electrophile in catalysis. E107 (proton acceptor) is an active-site residue.

This sequence belongs to the triosephosphate isomerase family. As to quaternary structure, homodimer.

It localises to the cytoplasm. It catalyses the reaction D-glyceraldehyde 3-phosphate = dihydroxyacetone phosphate. It participates in carbohydrate biosynthesis; gluconeogenesis. The protein operates within carbohydrate degradation; glycolysis; D-glyceraldehyde 3-phosphate from glycerone phosphate: step 1/1. The sequence is that of Triosephosphate isomerase, cytosolic from Lactuca sativa (Garden lettuce).